Consider the following 321-residue polypeptide: Malate dehydrogenase (321 aa).

Residues G10–G15 and D34 contribute to the NAD(+) site. The substrate site is built by R83 and R89. NAD(+)-binding positions include N96 and I119–N121. Substrate contacts are provided by N121 and R152. H176 acts as the Proton acceptor in catalysis.

Belongs to the LDH/MDH superfamily. MDH type 3 family.

The enzyme catalyses (S)-malate + NAD(+) = oxaloacetate + NADH + H(+). Functionally, catalyzes the reversible oxidation of malate to oxaloacetate. The polypeptide is Malate dehydrogenase (Xanthobacter autotrophicus (strain ATCC BAA-1158 / Py2)).